The chain runs to 170 residues: Co-chaperone protein HscB homolog (170 aa).

In terms of domain architecture, J spans 5–79; the sequence is DHFSLFGLPT…RARYLCEQAG (75 aa).

Belongs to the HscB family. Interacts with HscA and stimulates its ATPase activity.

Functionally, co-chaperone involved in the maturation of iron-sulfur cluster-containing proteins. Seems to help targeting proteins to be folded toward HscA. The protein is Co-chaperone protein HscB homolog of Bordetella bronchiseptica (strain ATCC BAA-588 / NCTC 13252 / RB50) (Alcaligenes bronchisepticus).